An 89-amino-acid polypeptide reads, in one-letter code: Small ribosomal subunit protein uS14 (89 aa).

Belongs to the universal ribosomal protein uS14 family. Part of the 30S ribosomal subunit. Contacts proteins S3 and S10.

Binds 16S rRNA, required for the assembly of 30S particles and may also be responsible for determining the conformation of the 16S rRNA at the A site. This is Small ribosomal subunit protein uS14 from Cytophaga hutchinsonii (strain ATCC 33406 / DSM 1761 / CIP 103989 / NBRC 15051 / NCIMB 9469 / D465).